We begin with the raw amino-acid sequence, 242 residues long: Phosducin-like protein 2 (242 aa).

The Phosducin domain occupies 34 to 201 (VLRLQKEAMV…LEWKLAEVGA (168 aa)). Positions 89–242 (FGELREISGN…SSNSDSEDTK (154 aa)) are thioredoxin fold.

Belongs to the phosducin family. In terms of assembly, interacts with the CCT chaperonin complex and actin.

Its subcellular location is the endoplasmic reticulum. Functionally, essential for male fertility, spermiogenesis and acrosome formation. The polypeptide is Phosducin-like protein 2 (PDCL2) (Bos taurus (Bovine)).